We begin with the raw amino-acid sequence, 274 residues long: Thiamine kinase (274 aa).

It belongs to the thiamine kinase family.

It catalyses the reaction thiamine + ATP = thiamine phosphate + ADP + H(+). The protein operates within cofactor biosynthesis; thiamine diphosphate biosynthesis; thiamine phosphate from thiamine: step 1/1. Functionally, catalyzes the ATP-dependent phosphorylation of thiamine to thiamine phosphate. Is involved in thiamine salvage. This is Thiamine kinase from Salmonella paratyphi A (strain ATCC 9150 / SARB42).